The chain runs to 109 residues: UPF0235 protein MA_4097 (109 aa).

It belongs to the UPF0235 family.

The protein is UPF0235 protein MA_4097 of Methanosarcina acetivorans (strain ATCC 35395 / DSM 2834 / JCM 12185 / C2A).